We begin with the raw amino-acid sequence, 122 residues long: Small ribosomal subunit protein uS13 (122 aa).

The segment at 99–122 is disordered; sequence RGQRTHTNARTRKGPAKAIAGKKK.

The protein belongs to the universal ribosomal protein uS13 family. As to quaternary structure, part of the 30S ribosomal subunit. Forms a loose heterodimer with protein S19. Forms two bridges to the 50S subunit in the 70S ribosome.

Functionally, located at the top of the head of the 30S subunit, it contacts several helices of the 16S rRNA. In the 70S ribosome it contacts the 23S rRNA (bridge B1a) and protein L5 of the 50S subunit (bridge B1b), connecting the 2 subunits; these bridges are implicated in subunit movement. Contacts the tRNAs in the A and P-sites. This chain is Small ribosomal subunit protein uS13, found in Allorhizobium ampelinum (strain ATCC BAA-846 / DSM 112012 / S4) (Agrobacterium vitis (strain S4)).